The primary structure comprises 1064 residues: Carbamoyl phosphate synthase large chain (1064 aa).

The segment at 1–401 (MPKRADIKKI…ALMKAIRSLE (401 aa)) is carboxyphosphate synthetic domain. Arg-129, Arg-169, Gly-175, Gly-176, Lys-208, Ile-210, Glu-215, Gly-241, Ile-242, His-243, Gln-284, and Glu-298 together coordinate ATP. Residues 133-327 (KQLMEALKEP…IAKMAAKIAI (195 aa)) form the ATP-grasp 1 domain. Mg(2+) is bound by residues Gln-284, Glu-298, and Asn-300. Mn(2+) contacts are provided by Gln-284, Glu-298, and Asn-300. Residues 402-546 (IGTFALDDLT…YSTYELENES (145 aa)) form an oligomerization domain region. Residues 547 to 929 (LKEKRPSVLV…ALYKAFVAAG (383 aa)) form a carbamoyl phosphate synthetic domain region. Positions 671-861 (NQVIKKLDLS…LAQLATRVML (191 aa)) constitute an ATP-grasp 2 domain. Residues Arg-707, Ser-746, Leu-748, Glu-752, Gly-777, Val-778, His-779, Ser-780, Gln-820, and Glu-832 each contribute to the ATP site. Gln-820, Glu-832, and Asn-834 together coordinate Mg(2+). Residues Gln-820, Glu-832, and Asn-834 each coordinate Mn(2+). An MGS-like domain is found at 930–1064 (FKVHEHGNVL…VSAINKGDKS (135 aa)). An allosteric domain region spans residues 930–1064 (FKVHEHGNVL…VSAINKGDKS (135 aa)).

Belongs to the CarB family. Composed of two chains; the small (or glutamine) chain promotes the hydrolysis of glutamine to ammonia, which is used by the large (or ammonia) chain to synthesize carbamoyl phosphate. Tetramer of heterodimers (alpha,beta)4. Mg(2+) is required as a cofactor. The cofactor is Mn(2+).

The catalysed reaction is hydrogencarbonate + L-glutamine + 2 ATP + H2O = carbamoyl phosphate + L-glutamate + 2 ADP + phosphate + 2 H(+). It carries out the reaction hydrogencarbonate + NH4(+) + 2 ATP = carbamoyl phosphate + 2 ADP + phosphate + 2 H(+). The protein operates within amino-acid biosynthesis; L-arginine biosynthesis; carbamoyl phosphate from bicarbonate: step 1/1. Its pathway is pyrimidine metabolism; UMP biosynthesis via de novo pathway; (S)-dihydroorotate from bicarbonate: step 1/3. Its function is as follows. Large subunit of the glutamine-dependent carbamoyl phosphate synthetase (CPSase). CPSase catalyzes the formation of carbamoyl phosphate from the ammonia moiety of glutamine, carbonate, and phosphate donated by ATP, constituting the first step of 2 biosynthetic pathways, one leading to arginine and/or urea and the other to pyrimidine nucleotides. The large subunit (synthetase) binds the substrates ammonia (free or transferred from glutamine from the small subunit), hydrogencarbonate and ATP and carries out an ATP-coupled ligase reaction, activating hydrogencarbonate by forming carboxy phosphate which reacts with ammonia to form carbamoyl phosphate. In Oenococcus oeni (strain ATCC BAA-331 / PSU-1), this protein is Carbamoyl phosphate synthase large chain.